A 240-amino-acid polypeptide reads, in one-letter code: MGGYSVTYSNFVKDPYKDWFPDDETNGASKILQWAYEVYGTDIVYACSFGAEGMVLIDLISKTQKNADIVFLDTDLHFQETYDLIEDIKVKYPTLNIHIKKPDLTLEEQAAEHGSALWKRQPDQCCYIRKIKPLEDALSGAPAWISGLRREQSVSRSKTDFINKDERFKSIKVCPLIHWTWDDVWEYIKDNNLPYNELHDNGYPSIGCIPCTSQVSDSSDSRAGRWAGTQKTECGLHTSD.

Residues C125, C126, C208, and C211 each contribute to the [4Fe-4S] cluster site. The active-site Nucleophile; cysteine thiosulfonate intermediate is the C234.

This sequence belongs to the PAPS reductase family. CysH subfamily. [4Fe-4S] cluster is required as a cofactor.

The protein localises to the cytoplasm. It catalyses the reaction [thioredoxin]-disulfide + sulfite + AMP + 2 H(+) = adenosine 5'-phosphosulfate + [thioredoxin]-dithiol. It functions in the pathway sulfur metabolism; hydrogen sulfide biosynthesis; sulfite from sulfate. Its function is as follows. Catalyzes the formation of sulfite from adenosine 5'-phosphosulfate (APS) using thioredoxin as an electron donor. The protein is Adenosine 5'-phosphosulfate reductase of Oceanobacillus iheyensis (strain DSM 14371 / CIP 107618 / JCM 11309 / KCTC 3954 / HTE831).